The following is a 114-amino-acid chain: Probable acid stress chaperone HdeA (114 aa).

The N-terminal stretch at 1 to 26 (MIKALFNKNTALAAVAILALSGGAMA) is a signal peptide. Cys-46 and Cys-94 are oxidised to a cystine.

This sequence belongs to the HdeA family.

The protein localises to the periplasm. Its function is as follows. Required for optimal acid stress protection. Exhibits a chaperone-like activity only at low pH by suppressing non-specifically the aggregation of denaturated periplasmic proteins. Contributes to acid resistance. Not required for wild-type virulence in the BALB/c mouse model. In Brucella abortus (strain 2308), this protein is Probable acid stress chaperone HdeA.